Here is a 730-residue protein sequence, read N- to C-terminus: Elongation factor 2 (730 aa).

The region spanning 19 to 229 (DYIRNIGIVA…NITFKDIIQY (211 aa)) is the tr-type G domain. GTP contacts are provided by residues 28–35 (AHIDHGKT), 94–98 (DTPGH), and 148–151 (NKVD). His-597 carries the post-translational modification Diphthamide.

It belongs to the TRAFAC class translation factor GTPase superfamily. Classic translation factor GTPase family. EF-G/EF-2 subfamily.

The protein localises to the cytoplasm. Its function is as follows. Catalyzes the GTP-dependent ribosomal translocation step during translation elongation. During this step, the ribosome changes from the pre-translocational (PRE) to the post-translocational (POST) state as the newly formed A-site-bound peptidyl-tRNA and P-site-bound deacylated tRNA move to the P and E sites, respectively. Catalyzes the coordinated movement of the two tRNA molecules, the mRNA and conformational changes in the ribosome. In Methanosphaera stadtmanae (strain ATCC 43021 / DSM 3091 / JCM 11832 / MCB-3), this protein is Elongation factor 2.